Reading from the N-terminus, the 48-residue chain is Sulfide dehydrogenase [flavocytochrome c] flavoprotein chain (48 aa).

40–46 is an FAD binding site; that stretch reads VTCPFSN.

Dimer of one cytochrome and one flavoprotein.

It is found in the periplasm. The enzyme catalyses hydrogen sulfide + 2 Fe(III)-[cytochrome c] = sulfur + 2 Fe(II)-[cytochrome c] + H(+). The sequence is that of Sulfide dehydrogenase [flavocytochrome c] flavoprotein chain from Chlorobaculum thiosulfatiphilum (Chlorobium limicola f.sp. thiosulfatophilum).